A 356-amino-acid chain; its full sequence is Histidinol-phosphate aminotransferase (356 aa).

Lys-214 is subject to N6-(pyridoxal phosphate)lysine.

Belongs to the class-II pyridoxal-phosphate-dependent aminotransferase family. Histidinol-phosphate aminotransferase subfamily. In terms of assembly, homodimer. The cofactor is pyridoxal 5'-phosphate.

The enzyme catalyses L-histidinol phosphate + 2-oxoglutarate = 3-(imidazol-4-yl)-2-oxopropyl phosphate + L-glutamate. It participates in amino-acid biosynthesis; L-histidine biosynthesis; L-histidine from 5-phospho-alpha-D-ribose 1-diphosphate: step 7/9. This is Histidinol-phosphate aminotransferase from Shigella boydii serotype 4 (strain Sb227).